The sequence spans 311 residues: Aspartate carbamoyltransferase catalytic subunit (311 aa).

Residues Arg-55 and Thr-56 each coordinate carbamoyl phosphate. Residue Lys-85 participates in L-aspartate binding. Positions 106, 135, and 138 each coordinate carbamoyl phosphate. L-aspartate is bound by residues Arg-168 and Arg-230. Positions 268 and 269 each coordinate carbamoyl phosphate.

This sequence belongs to the aspartate/ornithine carbamoyltransferase superfamily. ATCase family. As to quaternary structure, heterododecamer (2C3:3R2) of six catalytic PyrB chains organized as two trimers (C3), and six regulatory PyrI chains organized as three dimers (R2).

It carries out the reaction carbamoyl phosphate + L-aspartate = N-carbamoyl-L-aspartate + phosphate + H(+). Its pathway is pyrimidine metabolism; UMP biosynthesis via de novo pathway; (S)-dihydroorotate from bicarbonate: step 2/3. Catalyzes the condensation of carbamoyl phosphate and aspartate to form carbamoyl aspartate and inorganic phosphate, the committed step in the de novo pyrimidine nucleotide biosynthesis pathway. This Yersinia pseudotuberculosis serotype IB (strain PB1/+) protein is Aspartate carbamoyltransferase catalytic subunit.